A 77-amino-acid chain; its full sequence is EMBRYO SURROUNDING FACTOR 1-like protein 6 (77 aa).

An N-terminal signal peptide occupies residues 1 to 25 (MSPSHFAILFIIVISLVPLHGYANG). 4 disulfide bridges follow: Cys-38-Cys-53, Cys-43-Cys-72, Cys-51-Cys-68, and Cys-54-Cys-61.

The protein belongs to the MEG family.

This is EMBRYO SURROUNDING FACTOR 1-like protein 6 (ESFL6) from Arabidopsis thaliana (Mouse-ear cress).